The following is a 951-amino-acid chain: 2-oxoglutarate dehydrogenase E1 component (951 aa).

The segment at Arg-906–Ala-925 is disordered.

It belongs to the alpha-ketoglutarate dehydrogenase family. In terms of assembly, homodimer. Part of the 2-oxoglutarate dehydrogenase (OGDH) complex composed of E1 (2-oxoglutarate dehydrogenase), E2 (dihydrolipoamide succinyltransferase) and E3 (dihydrolipoamide dehydrogenase); the complex contains multiple copies of the three enzymatic components (E1, E2 and E3). It depends on thiamine diphosphate as a cofactor.

The enzyme catalyses N(6)-[(R)-lipoyl]-L-lysyl-[protein] + 2-oxoglutarate + H(+) = N(6)-[(R)-S(8)-succinyldihydrolipoyl]-L-lysyl-[protein] + CO2. Functionally, E1 component of the 2-oxoglutarate dehydrogenase (OGDH) complex which catalyzes the decarboxylation of 2-oxoglutarate, the first step in the conversion of 2-oxoglutarate to succinyl-CoA and CO(2). This Exiguobacterium sp. (strain ATCC BAA-1283 / AT1b) protein is 2-oxoglutarate dehydrogenase E1 component.